Here is a 266-residue protein sequence, read N- to C-terminus: Shikimate dehydrogenase (NADP(+)) (266 aa).

Shikimate is bound by residues 14–16 and T61; that span reads SLS. Residue K65 is the Proton acceptor of the active site. Residues N85 and D100 each contribute to the shikimate site. Residues 124-128 and A210 contribute to the NADP(+) site; that span reads GAGGA. Position 212 (Y212) interacts with shikimate. G233 provides a ligand contact to NADP(+).

The protein belongs to the shikimate dehydrogenase family. As to quaternary structure, homodimer.

The catalysed reaction is shikimate + NADP(+) = 3-dehydroshikimate + NADPH + H(+). It functions in the pathway metabolic intermediate biosynthesis; chorismate biosynthesis; chorismate from D-erythrose 4-phosphate and phosphoenolpyruvate: step 4/7. In terms of biological role, involved in the biosynthesis of the chorismate, which leads to the biosynthesis of aromatic amino acids. Catalyzes the reversible NADPH linked reduction of 3-dehydroshikimate (DHSA) to yield shikimate (SA). This Halobacterium salinarum (strain ATCC 29341 / DSM 671 / R1) protein is Shikimate dehydrogenase (NADP(+)).